The following is a 716-amino-acid chain: Segment polarity protein dishevelled homolog DVL-3 (716 aa).

The 82-residue stretch at 1–82 folds into the DIX domain; the sequence is MGETKIIYHL…RVVSWLVSAE (82 aa). Omega-N-methylarginine is present on arginine 27. Residues serine 48 and serine 125 each carry the phosphoserine modification. The interval 85–235 is disordered; that stretch reads HPDPAPFCAD…VSRIERSSSF (151 aa). Over residues 142–156 the composition is skewed to basic and acidic residues; sequence QRERPRRRDGPEHAT. Over residues 175–190 the composition is skewed to low complexity; sequence SSSTLMSSELETTSFF. Serine 192 is subject to Phosphoserine. Residues 199-212 are compositionally biased toward low complexity; it reads SRFSSSTEQSSASR. Residue arginine 212 is modified to Omega-N-methylarginine. The segment covering 213 to 226 has biased composition (basic residues); the sequence is LMRRHKRRRRKQKV. The 73-residue stretch at 249–321 folds into the PDZ domain; it reads TVTLNMEKYN…NDDAVRVLRE (73 aa). Arginine 271 is modified (asymmetric dimethylarginine; by PRMT1; alternate). 2 positions are modified to symmetric dimethylarginine; by PRMT7; alternate: arginine 271 and arginine 342. Arginine 342 carries the post-translational modification Omega-N-methylarginine; alternate. Threonine 346 is subject to Phosphothreonine. Residues 422–496 form the DEP domain; it reads PESGLEVRDR…SEQCYYIFGD (75 aa). Positions 546-691 are disordered; the sequence is PYNPHPGFPE…PPGRDLASVP (146 aa). The span at 565 to 581 shows a compositional bias: low complexity; it reads ASSQHSEGSRSSGSNRS. Basic and acidic residues-rich tracts occupy residues 582–595 and 604–622; these read GSDR…KAGD and ESDH…RAPS. Arginine 614 bears the Symmetric dimethylarginine; by PRMT7 mark. The segment covering 653–682 has biased composition (pro residues); sequence YGPPGVPPLYGPPMLMMPPPPAAMGPPGAP. Serine 697 carries the post-translational modification Phosphoserine. The residue at position 698 (arginine 698) is an Omega-N-methylarginine; alternate. A Dimethylated arginine; alternate modification is found at arginine 698. The residue at position 700 (serine 700) is a Phosphoserine.

Belongs to the DSH family. Interacts (via the PDZ domain) with the C-terminal regions of VANGL1 and VANGL2. Interacts (via the region containing both the PDZ and DEP domains) with LRRFIP2; the DIX domain may inhibit this interaction. Interacts with CYLD, CEP164 and DAB2. Interacts with DCDC2. Interacts with FOXK1 and FOXK2. Interacts with DAAM2. Post-translationally, ubiquitinated. Deubiquitinated by CYLD, which acts on 'Lys-63'-linked ubiquitin chains. Phosphorylated by CSNK1D. In terms of processing, arginine methylation may function as a switch in regulation of function in Wnt signaling.

The protein localises to the cytoplasm. Its function is as follows. Involved in the signal transduction pathway mediated by multiple Wnt genes. The protein is Segment polarity protein dishevelled homolog DVL-3 (DVL3) of Homo sapiens (Human).